The primary structure comprises 211 residues: Receptor expression-enhancing protein 6 (211 aa).

Transmembrane regions (helical) follow at residues leucine 44–valine 64 and tryptophan 89–phenylalanine 109. The disordered stretch occupies residues alanine 190–lysine 211. Positions proline 202 to lysine 211 are enriched in polar residues.

The protein belongs to the DP1 family. Interacts with STX3. Interacts with clathrin. Expressed in circumvallate papillae and testis. Expressed in the retina. Isoform 1 is predominantly present in mature optic cups. Isoform 1 expression is confined to the cell body and inner segment of developing rod photoreceptor cells.

The protein resides in the endoplasmic reticulum membrane. The protein localises to the cytoplasmic vesicle. It localises to the clathrin-coated vesicle membrane. In terms of biological role, required for correct function and survival of retinal photoreceptors. Required for retinal development. In rod photoreceptors, facilitates stability and/or trafficking of guanylate cyclases and is required to maintain endoplasmic reticulum and mitochondrial homeostasis. May play a role in clathrin-coated intracellular vesicle trafficking of proteins from the endoplasmic reticulum to the retinal rod plasma membrane. The sequence is that of Receptor expression-enhancing protein 6 (REEP6) from Homo sapiens (Human).